The sequence spans 360 residues: Lipid-A-disaccharide synthase (360 aa).

This sequence belongs to the LpxB family.

It carries out the reaction a lipid X + a UDP-2-N,3-O-bis[(3R)-3-hydroxyacyl]-alpha-D-glucosamine = a lipid A disaccharide + UDP + H(+). It functions in the pathway bacterial outer membrane biogenesis; LPS lipid A biosynthesis. Functionally, condensation of UDP-2,3-diacylglucosamine and 2,3-diacylglucosamine-1-phosphate to form lipid A disaccharide, a precursor of lipid A, a phosphorylated glycolipid that anchors the lipopolysaccharide to the outer membrane of the cell. This is Lipid-A-disaccharide synthase from Helicobacter pylori (strain G27).